The chain runs to 149 residues: Large ribosomal subunit protein bL9 (149 aa).

It belongs to the bacterial ribosomal protein bL9 family.

Its function is as follows. Binds to the 23S rRNA. The sequence is that of Large ribosomal subunit protein bL9 from Magnetococcus marinus (strain ATCC BAA-1437 / JCM 17883 / MC-1).